A 495-amino-acid chain; its full sequence is COP9 signalosome complex subunit 2 (495 aa).

Positions 1–26 are disordered; that stretch reads MGDEYMDDDEDYGFEYEDDSGSEPDV. The region spanning 254–416 is the PCI domain; the sequence is AHTDFFEAFK…GMIEMPKNKK (163 aa). A disordered region spans residues 426 to 468; that stretch reads PNAGDQGTTKSDSKPGTSSEPSTTTSVTSSILQGPPATSSCHQ. A compositionally biased stretch (polar residues) spans 430 to 441; that stretch reads DQGTTKSDSKPG. The span at 442-455 shows a compositional bias: low complexity; that stretch reads TSSEPSTTTSVTSS.

It belongs to the CSN2 family. Component of the CSN complex, probably composed of csn-1, csn-2, csn-3, csn-4, csn-5, csn-6 and csn-7. Within the complex it probably interacts directly with csn-1, csn-3 and csn-4.

The protein resides in the cytoplasm. It localises to the nucleus. In terms of biological role, essential component of the COP9 signalosome complex (CSN), a complex involved in various cellular and developmental processes. The CSN complex is an essential regulator of the ubiquitin (Ubl) conjugation pathway by mediating the deneddylation of the cullin subunits of the SCF-type E3 ligase complexes, leading to decrease the Ubl ligase activity of SCF. The CSN complex plays an essential role in embryogenesis and oogenesis and is required to regulate microtubule stability in the early embryo. Mediates mei-3/katanin targeting for degradation at the meiosis to mitosis transition via deneddylation of cul-3. The protein is COP9 signalosome complex subunit 2 (csn-2) of Caenorhabditis elegans.